The chain runs to 270 residues: MKNNKPICFYDIYCFKPQECFKRNDINLLEDKLKRYSKITFLRNKENPEIIFLLGGDGSFINFINQQWKKNVKIVGINYGQLGFYSSYDSIKTINLDEIIDENMYYNPLLLKVSINNQNFFYCLNELSLFSNELVSFDISINDYPYEKFRGSGLLFVTPSGSTGKNKTAFGPIIFNNHENFIMTEIFPVNHLKYSSLNAPVVFRKDYKISLTNIKFKKSFSVAIDGNIINFSDKINDIKVETIQASSKIHGLNNFKKYIDKLNKSFIKGE.

Asp57 serves as the catalytic Proton acceptor. Residues 57-58 (DG), 125-126 (NE), Arg150, and Asn227 contribute to the NAD(+) site.

This sequence belongs to the NAD kinase family. It depends on a divalent metal cation as a cofactor.

The protein resides in the cytoplasm. It catalyses the reaction NAD(+) + ATP = ADP + NADP(+) + H(+). Its function is as follows. Involved in the regulation of the intracellular balance of NAD and NADP, and is a key enzyme in the biosynthesis of NADP. Catalyzes specifically the phosphorylation on 2'-hydroxyl of the adenosine moiety of NAD to yield NADP. The protein is NAD kinase of Ureaplasma parvum serovar 3 (strain ATCC 700970).